The chain runs to 258 residues: L-rhamnose-1-dehydrogenase (258 aa).

3 residues coordinate NADP(+): Ile-19, Asp-68, and Asn-95. Active-site proton donor residues include Ser-147 and Tyr-161. Tyr-161, Lys-165, Ile-194, and Thr-196 together coordinate NADP(+). Lys-165 functions as the Lowers pKa of active site Tyr in the catalytic mechanism.

Belongs to the short-chain dehydrogenases/reductases (SDR) family.

It catalyses the reaction L-rhamnofuranose + NAD(+) = L-rhamnono-1,4-lactone + NADH + H(+). In terms of biological role, NAD-dependent dehydrogenase that has high activity with L-rhamnose and L-lyxose, and shows only low activity with L-mannose. Has no activity with NADP. Catalyzes the first step in an alternative pathway for rhamnose utilization that does not involve phosphorylated intermediates. The sequence is that of L-rhamnose-1-dehydrogenase (DHG2) from Scheffersomyces stipitis (strain ATCC 58785 / CBS 6054 / NBRC 10063 / NRRL Y-11545) (Yeast).